Reading from the N-terminus, the 178-residue chain is Ribonuclease M5 (178 aa).

Positions 4–100 (NEFIVVEGRD…KIGVEHADLI (97 aa)) constitute a Toprim domain. Positions 10, 56, and 58 each coordinate Mg(2+).

It belongs to the ribonuclease M5 family. Mg(2+) is required as a cofactor.

The protein resides in the cytoplasm. It catalyses the reaction Endonucleolytic cleavage of RNA, removing 21 and 42 nucleotides, respectively, from the 5'- and 3'-termini of a 5S-rRNA precursor.. In terms of biological role, required for correct processing of both the 5' and 3' ends of 5S rRNA precursor. Cleaves both sides of a double-stranded region yielding mature 5S rRNA in one step. The protein is Ribonuclease M5 of Staphylococcus aureus (strain NCTC 8325 / PS 47).